The sequence spans 883 residues: Alanine--tRNA ligase (883 aa).

The Zn(2+) site is built by His-560, His-564, Cys-665, and His-669.

Belongs to the class-II aminoacyl-tRNA synthetase family. It depends on Zn(2+) as a cofactor.

The protein localises to the cytoplasm. The enzyme catalyses tRNA(Ala) + L-alanine + ATP = L-alanyl-tRNA(Ala) + AMP + diphosphate. Functionally, catalyzes the attachment of alanine to tRNA(Ala) in a two-step reaction: alanine is first activated by ATP to form Ala-AMP and then transferred to the acceptor end of tRNA(Ala). Also edits incorrectly charged Ser-tRNA(Ala) and Gly-tRNA(Ala) via its editing domain. This Mesomycoplasma hyopneumoniae (strain 232) (Mycoplasma hyopneumoniae) protein is Alanine--tRNA ligase.